Consider the following 1002-residue polypeptide: MDSNADISARRVSGMDWLWLVCFFHLVTSLEEILLDTTGETSEIGWTSHPPDGWEEVSVRDDKERQIRTFQVCNMDEPGQNNWLRTHFIERRGAHRVHVRLHFSVRDCASMRTVASTCKETFTLYYHQSDVDIASQELPEWHEGPWTKVDTIAADESFSQVDRTGKVVRMNVKVRSFGPLTKHGFYLAFQDSGACMSLVAVQVFFYKCPAVVKGFASFPETFAGGERTSLVESLGTCVANAEEASTTGSSGVRLHCNGEGEWMVATGRCSCKAGYQSVDNEQACQACPIGSFKASVGDDPCLLCPAHSHAPLPLPGSIECVCQSHYYRSASDNSDAPCTGIPSAPRDLSYEIVGSNVLLTWRLPKDLGGRKDVFFNVICKECPTRSAGTCVRCGDNVQFEPRQVGLTESRVQVSNLLARVQYTFEIQAVNLVTELSSEAPQYATINVSTSQSVPSAIPMMHQVSRATSSITLSWPQPDQPNGVILDYQLRYFDKAEDEDNSFTLTSETNMATILNLSPGKIYVFQVRARTAVGYGPYSGKMYFQTLMAGEHSEMAQDRLPLIVGSALGGLAFLVIAAIAILAIIFKSKRRETPYTDRLQQYISTRGLGVKYYIDPSTYEDPNEAIREFAKEIDVSFIKIEEVIGSGEFGEVCFGRLKHPGKREYTVAIKTLKSGYTDEQRREFLSEASIMGQFEHPNVIHLEGVVTKSRPVMIVTEFMENGSLDSFLRQKEGQFSVLQLVGMLRGIAAGMRYLSDMNYVHRDLAARNILVNSNLVCKVSDFGLSRFLEDDASNPTYTGALGCKIPIRWTAPEAVQYRKFTSSSDVWSYGIVMWEVMSYGERPYWDMSNQDVINAIDQDYRLPPPPDCPTVLHLLMLDCWQKDRVQRPKFEQIVSALDKMIRKPSALKATGTGSSRPSQPLLSNSPPDFPSLSNAHEWLDAIKMGRYKENFDQAGLITFDVISRMTLEDLQRIGITLVGHQKKILNSIQLMKVHLNQLEPVEV.

The N-terminal stretch at 1–29 (MDSNADISARRVSGMDWLWLVCFFHLVTS) is a signal peptide. Residues 30–564 (LEEILLDTTG…AQDRLPLIVG (535 aa)) are Extracellular-facing. The region spanning 31–213 (EEILLDTTGE…FFYKCPAVVK (183 aa)) is the Eph LBD domain. Fibronectin type-III domains lie at 344 to 452 (APRD…TSQS) and 453 to 548 (VPSA…TLMA). N-linked (GlcNAc...) asparagine glycosylation occurs at asparagine 446. The chain crosses the membrane as a helical span at residues 565-585 (SALGGLAFLVIAAIAILAIIF). The Cytoplasmic segment spans residues 586–1002 (KSKRRETPYT…HLNQLEPVEV (417 aa)). In terms of domain architecture, Protein kinase spans 637–900 (IKIEEVIGSG…QIVSALDKMI (264 aa)). ATP is bound by residues 643 to 651 (IGSGEFGEV) and lysine 669. Aspartate 762 acts as the Proton acceptor in catalysis. The segment at 906–928 (LKATGTGSSRPSQPLLSNSPPDF) is disordered. Residues 910–928 (GTGSSRPSQPLLSNSPPDF) show a composition bias toward polar residues. In terms of domain architecture, SAM spans 929-993 (PSLSNAHEWL…LNSIQLMKVH (65 aa)). Residues 1000 to 1002 (VEV) carry the PDZ-binding motif.

The protein belongs to the protein kinase superfamily. Tyr protein kinase family. Ephrin receptor subfamily. In terms of tissue distribution, most abundant in thymus and detectable in brain, retina, kidney, lung and heart. Not detected in skeletal muscle and liver.

The protein resides in the membrane. The enzyme catalyses L-tyrosyl-[protein] + ATP = O-phospho-L-tyrosyl-[protein] + ADP + H(+). In terms of biological role, receptor for members of the ephrin-B family. In Gallus gallus (Chicken), this protein is Ephrin type-B receptor 5 (EPHB5).